Here is a 160-residue protein sequence, read N- to C-terminus: Cytochrome b6-f complex subunit 4 (160 aa).

3 helical membrane passes run 36–56 (LLYI…GLAV), 95–115 (LLGV…PFLE), and 131–151 (TVFL…TLPI).

This sequence belongs to the cytochrome b family. PetD subfamily. In terms of assembly, the 4 large subunits of the cytochrome b6-f complex are cytochrome b6, subunit IV (17 kDa polypeptide, petD), cytochrome f and the Rieske protein, while the 4 small subunits are petG, petL, petM and petN. The complex functions as a dimer.

It is found in the plastid. Its subcellular location is the chloroplast thylakoid membrane. Component of the cytochrome b6-f complex, which mediates electron transfer between photosystem II (PSII) and photosystem I (PSI), cyclic electron flow around PSI, and state transitions. The chain is Cytochrome b6-f complex subunit 4 from Saccharum hybrid (Sugarcane).